The primary structure comprises 244 residues: Type III pantothenate kinase (244 aa).

11 to 18 (DAGNTSIK) contacts ATP. Substrate-binding positions include Y90 and 97–100 (GIDR). Catalysis depends on D99, which acts as the Proton acceptor. Position 119 (D119) interacts with K(+). T122 is an ATP binding site. T175 contributes to the substrate binding site.

This sequence belongs to the type III pantothenate kinase family. Homodimer. It depends on NH4(+) as a cofactor. K(+) serves as cofactor.

The protein resides in the cytoplasm. It carries out the reaction (R)-pantothenate + ATP = (R)-4'-phosphopantothenate + ADP + H(+). It functions in the pathway cofactor biosynthesis; coenzyme A biosynthesis; CoA from (R)-pantothenate: step 1/5. Its function is as follows. Catalyzes the phosphorylation of pantothenate (Pan), the first step in CoA biosynthesis. This Marinomonas sp. (strain MWYL1) protein is Type III pantothenate kinase.